Consider the following 162-residue polypeptide: Cytochrome c-type biogenesis protein CcmE (162 aa).

Over M1–R7 the chain is Cytoplasmic. The helical; Signal-anchor for type II membrane protein transmembrane segment at L8–A28 threads the bilayer. Topologically, residues L29–Q162 are periplasmic. Residues H122 and Y126 each coordinate heme. The disordered stretch occupies residues H140 to Q162.

This sequence belongs to the CcmE/CycJ family.

Its subcellular location is the cell inner membrane. Functionally, heme chaperone required for the biogenesis of c-type cytochromes. Transiently binds heme delivered by CcmC and transfers the heme to apo-cytochromes in a process facilitated by CcmF and CcmH. The polypeptide is Cytochrome c-type biogenesis protein CcmE (Nitrobacter winogradskyi (strain ATCC 25391 / DSM 10237 / CIP 104748 / NCIMB 11846 / Nb-255)).